A 199-amino-acid chain; its full sequence is Thymidylate kinase (199 aa).

ATP is bound at residue 7–14 (GIDGSGKS).

Belongs to the thymidylate kinase family.

The catalysed reaction is dTMP + ATP = dTDP + ADP. Functionally, phosphorylation of dTMP to form dTDP in both de novo and salvage pathways of dTTP synthesis. The polypeptide is Thymidylate kinase (Neorickettsia sennetsu (strain ATCC VR-367 / Miyayama) (Ehrlichia sennetsu)).